Consider the following 704-residue polypeptide: Structure-specific endonuclease subunit SLX1 homolog (704 aa).

The GIY-YIG domain maps to 4-90; the sequence is RFHCVYLLTS…TASARLRHTI (87 aa). Disordered stretches follow at residues 157–180, 290–323, and 354–378; these read ESPRVGTQQHSQRSSSLQGQADGV, ASFASDSDDEDTRRLAPYCPSAGSSTPSPQRVRT, and GAALRSFSSPPPPRESSPRSASRPP. Composition is skewed to polar residues over residues 161 to 175 and 311 to 320; these read VGTQQHSQRSSSLQG and AGSSTPSPQR. The SLX1-type zinc finger occupies 446 to 526; that stretch reads CSLCALPLQP…PSQPCPCPLC (81 aa). 2 disordered regions span residues 601–629 and 650–671; these read VPGAASTVPAPTMHAGPARRDAPRVSSPI and ASLAALSPTSASPISRHNGHSN. Residues 650 to 662 show a composition bias toward low complexity; it reads ASLAALSPTSASP.

The protein belongs to the SLX1 family. As to quaternary structure, forms a heterodimer with a member of the SLX4 family. A divalent metal cation serves as cofactor.

It localises to the nucleus. Catalytic subunit of a heterodimeric structure-specific endonuclease that resolves DNA secondary structures generated during DNA repair and recombination. Has endonuclease activity towards branched DNA substrates, introducing single-strand cuts in duplex DNA close to junctions with ss-DNA. This Leishmania major protein is Structure-specific endonuclease subunit SLX1 homolog.